The chain runs to 196 residues: Endoribonuclease YbeY (196 aa).

3 residues coordinate Zn(2+): histidine 120, histidine 124, and histidine 130.

The protein belongs to the endoribonuclease YbeY family. The cofactor is Zn(2+).

The protein resides in the cytoplasm. Single strand-specific metallo-endoribonuclease involved in late-stage 70S ribosome quality control and in maturation of the 3' terminus of the 16S rRNA. In Corynebacterium glutamicum (strain R), this protein is Endoribonuclease YbeY.